Consider the following 504-residue polypeptide: Cytochrome P450 3A11 (504 aa).

Residue Cys443 coordinates heme.

Belongs to the cytochrome P450 family. Requires heme as cofactor. In terms of tissue distribution, highly expressed in liver.

The protein resides in the endoplasmic reticulum membrane. It is found in the microsome membrane. The catalysed reaction is an organic molecule + reduced [NADPH--hemoprotein reductase] + O2 = an alcohol + oxidized [NADPH--hemoprotein reductase] + H2O + H(+). Its function is as follows. Catalyzes erythromycin N-demethylation, nifedipine oxidation and testosterone 6 beta-hydroxylation. The protein is Cytochrome P450 3A11 (Cyp3a11) of Mus musculus (Mouse).